The following is a 90-amino-acid chain: uncharacterized protein (90 aa).

Residues 1 to 20 (MEKLFVLVFALTLLAFSSEA) form the signal peptide. The interval 31 to 50 (QLLRSRRQDRPSKPGFPDEP) is disordered.

The protein resides in the secreted. This is an uncharacterized protein from Rattus norvegicus (Rat).